We begin with the raw amino-acid sequence, 1396 residues long: MNREALCHDDPIGHDRLRPDSIPRDPKWTDEQWQAITARNSDILVAAAAGAGKTAVLVERLIGIIKEGVDVDRLLVVTFTNAAAAEMRERIRTALTKELARHPHQTWLRQQLVLLNRATITTLHSFCLDLVRKYYYRLDLDPAFRVADETEIALLRQDVLDEVFERFYERAGAKEGTESKGEYFTALVDAYGGDRDDSPLQDIVLQLYEKALSQPWPEQWLQDILGKFQEAGDTIAEQTLPGELPAWEALPWFAALREEMSIDLAEVESLLVRALSLCRQPGGPAAYGDAVTADLQLTQDLHLAAGRSWTQLHECFQALSFTRVKAVRGPVDESLKKEVSRLRYQAKKKLTDLQKKYFLRTPHDLVSDLTQVLPLMATLVDVVLAFDRAFQAAKREKRLVDFNDLEHFCLRLLLDESASPGVPVPSSLALELKEHFAEVLTDEYQDTNTVQETILTLLSRNNRFMVGDVKQSIYRFRLAEPNLFLEKYRSFSPYDTPGPVNSDHGAPDHAFSGQGASVPGARIDLAKNFRSRRNVLSAVNDLFRRIMTPRAGEMAYDRQAELVYGAAFPELPGRSGDPVIELWLLQRQPDADGSEESIETQQNANETKGAIDGDHKNIAKAGESPAQNTADVAGESPSDDAGEDAGQPTGGEEELLLLETAQYEARLAARRIEELMKSAMPVYDREQGGYRPVCYRDIVILMRSTKGRADIFLEEFRAAAIPAYADTGAGYFEATEVSILLSLLRVIDNPCQDIPLAAVLRSPIFRFTGEDLARIRLAEPRKTFFDAIEAFIGQAEAAARDTFTPIDPVAIRLREFLRQIDAWRTLARRDSLAKLIATIYRETGFYDYAGAMPGGGQRQANLRALYDRARQYEATTLRGLFRFLRFIERLQDQGGDLGTARTLGEKEDVVRIMSIHKSKGLEFPVVFVAGLGSQFNLQDLRRDLLIHKNLGLGPVVVDTQLRYRYPTVAKLAIQRRLHRETLAEEMRILYVALTRAKEKLILLGTVREVAKSAQQWLHDAEGIPVAAALPDEVLLRAKCYLDWIGPALVGHPDGQEIRRWAEGAPALGATLPENNLTMTKNETMTEQERIDGSSRWRLFYAAKKELIGLRKETGSETPFNPVWLEKLRRLEPIIPTDLVDASLSWSYPYTGLSGIAAKVAVSRIKKQFVWHSPETPPSSETPPSLEIPPSLETPPSLETQTPSPDALVDLRPRFLQQDRRLTATERGSAVHLFLQHLDLAGEISQAGIAGQADRLVKLELLSLEQRQALNEEEILRFLESPLGHRLRKAKQVMREVPFTLALPAAEIYPEKRAEGESVIIQGVIDCLFEEDDGWLLLDYKTDRCPVGMDRERWLQQLRDSYLGQVNLYHRAVESVLKVKVKGRCLFLLSIGREMAL.

The disordered stretch occupies residues 1–25 (MNREALCHDDPIGHDRLRPDSIPRD). The 507-residue stretch at 26–532 (PKWTDEQWQA…IDLAKNFRSR (507 aa)) folds into the UvrD-like helicase ATP-binding domain. Residue 47–54 (AAAGAGKT) participates in ATP binding. Disordered regions lie at residues 590–649 (DADG…GQPT) and 1171–1205 (HSPETPPSSETPPSLEIPPSLETPPSLETQTPSPD). In terms of domain architecture, UvrD-like helicase C-terminal spans 615-920 (HKNIAKAGES…RIMSIHKSKG (306 aa)). The segment covering 1181-1199 (TPPSLEIPPSLETPPSLET) has biased composition (low complexity).

The protein belongs to the helicase family. AddA subfamily. Heterodimer of AddA and AddB/RexB. Requires Mg(2+) as cofactor.

The enzyme catalyses Couples ATP hydrolysis with the unwinding of duplex DNA by translocating in the 3'-5' direction.. It carries out the reaction ATP + H2O = ADP + phosphate + H(+). Its function is as follows. The heterodimer acts as both an ATP-dependent DNA helicase and an ATP-dependent, dual-direction single-stranded exonuclease. Recognizes the chi site generating a DNA molecule suitable for the initiation of homologous recombination. The AddA nuclease domain is required for chi fragment generation; this subunit has the helicase and 3' -&gt; 5' nuclease activities. The chain is ATP-dependent helicase/nuclease subunit A from Heliobacterium modesticaldum (strain ATCC 51547 / Ice1).